The chain runs to 493 residues: CBL-interacting protein kinase 26 (493 aa).

The 255-residue stretch at 12–266 (YEIGRQLGQG…IPKIKRSAWY (255 aa)) folds into the Protein kinase domain. ATP contacts are provided by residues 18-26 (LGQGNFAKV) and K41. D134 (proton acceptor) is an active-site residue. Residues 152-181 (DFGLSALSESKRHDGLLHTTCGTPAYVAPE) are activation loop. The disordered stretch occupies residues 311–332 (KVYTNGEATTSDSPECSNSDGK). Positions 316–332 (GEATTSDSPECSNSDGK) are enriched in polar residues. Residues 320 to 360 (TSDSPECSNSDGKQASLSLPNLNAFDIISLSTGFDLSNLFE) form the NAF domain. Residues 365 to 394 (RREERFTTRQPAAAIFAKLNELARRFKLKI) form a PPI region. The interval 465–493 (GQHQQPEQSMQGMQGEQQPSRLPSQQPQG) is disordered.

It belongs to the protein kinase superfamily. CAMK Ser/Thr protein kinase family. SNF1 subfamily. Mn(2+) serves as cofactor.

It carries out the reaction L-seryl-[protein] + ATP = O-phospho-L-seryl-[protein] + ADP + H(+). The enzyme catalyses L-threonyl-[protein] + ATP = O-phospho-L-threonyl-[protein] + ADP + H(+). Its function is as follows. CIPK serine-threonine protein kinases interact with CBL proteins. Binding of a CBL protein to the regulatory NAF domain of CIPK protein lead to the activation of the kinase in a calcium-dependent manner. The chain is CBL-interacting protein kinase 26 (CIPK26) from Oryza sativa subsp. japonica (Rice).